The primary structure comprises 417 residues: Tyrosine--tRNA ligase (417 aa).

Tyrosine 40 contributes to the L-tyrosine binding site. The 'HIGH' region signature appears at 45 to 54 (ATAASLHVGH). Tyrosine 177 and glutamine 181 together coordinate L-tyrosine. The short motif at 237–241 (KMGKS) is the 'KMSKS' region element. ATP is bound at residue lysine 240. The S4 RNA-binding domain maps to 351–414 (ISVVQLITRS…AGRKRHALIK (64 aa)).

This sequence belongs to the class-I aminoacyl-tRNA synthetase family. TyrS type 1 subfamily. As to quaternary structure, homodimer.

The protein localises to the cytoplasm. The enzyme catalyses tRNA(Tyr) + L-tyrosine + ATP = L-tyrosyl-tRNA(Tyr) + AMP + diphosphate + H(+). Catalyzes the attachment of tyrosine to tRNA(Tyr) in a two-step reaction: tyrosine is first activated by ATP to form Tyr-AMP and then transferred to the acceptor end of tRNA(Tyr). The chain is Tyrosine--tRNA ligase from Dinoroseobacter shibae (strain DSM 16493 / NCIMB 14021 / DFL 12).